Here is a 715-residue protein sequence, read N- to C-terminus: Forkhead box protein P2 (715 aa).

The segment covering 1 to 28 (MMQESATETISNSSMNQNGMSTLSSQLD) has biased composition (polar residues). Disordered stretches follow at residues 1–46 (MMQE…EVST) and 281–339 (DNGI…TGAS). Residues 292-305 (TTNNSSSTTSSNTS) are compositionally biased toward low complexity. The span at 326–337 (ARRDSSSHEETG) shows a compositional bias: basic and acidic residues. Residues 346–371 (GVCKWPGCESICEDFGQFLKHLNNEH) form a C2H2-type zinc finger. Positions 388–409 (VQQLEIQLSKERERLQAMMTHL) are leucine-zipper. The CTBP1-binding stretch occupies residues 422–426 (PLNLV). Residues 438–459 (TSPQSLPQTPTTPTAPVTPITQ) show a composition bias toward low complexity. Positions 438–465 (TSPQSLPQTPTTPTAPVTPITQGPSVIT) are disordered. The segment at residues 504–594 (RPPFTYATLI…SQKITGSPTL (91 aa)) is a DNA-binding region (fork-head). Disordered stretches follow at residues 649 to 668 (LDHI…QPHI) and 678 to 715 (VIAE…EDLE). The segment covering 699–715 (LEDDREIEEEPLSEDLE) has biased composition (acidic residues).

In terms of assembly, forms homodimers and heterodimers with FOXP1 and FOXP4. Dimerization is required for DNA-binding. Interacts with CTBP1. Interacts with FOXP1. Isoform 1 and isoform 3 interact with TBR1. Interacts with ZMYM2. Isoform 1 and isoform 6 are expressed in adult and fetal brain, caudate nucleus and lung.

The protein localises to the nucleus. Its function is as follows. Transcriptional repressor that may play a role in the specification and differentiation of lung epithelium. May also play a role in developing neural, gastrointestinal and cardiovascular tissues. Can act with CTBP1 to synergistically repress transcription but CTPBP1 is not essential. Plays a role in synapse formation by regulating SRPX2 levels. Involved in neural mechanisms mediating the development of speech and language. The sequence is that of Forkhead box protein P2 (FOXP2) from Homo sapiens (Human).